We begin with the raw amino-acid sequence, 358 residues long: Glutamate--cysteine ligase (358 aa).

The protein belongs to the glutamate--cysteine ligase type 2 family. YbdK subfamily.

It carries out the reaction L-cysteine + L-glutamate + ATP = gamma-L-glutamyl-L-cysteine + ADP + phosphate + H(+). Functionally, catalyzes the synthesis of gamma-glutamylcysteine (gamma-GC), the main low-molecular-weight thiol compound instead of glutathione in halophilic archaea. The protein is Glutamate--cysteine ligase of Haloferax volcanii (strain ATCC 29605 / DSM 3757 / JCM 8879 / NBRC 14742 / NCIMB 2012 / VKM B-1768 / DS2) (Halobacterium volcanii).